A 2343-amino-acid polypeptide reads, in one-letter code: Pecanex-like protein 1 (2343 aa).

2 helical membrane-spanning segments follow: residues 33–53 (ALHL…YMAL) and 57–77 (MIIV…LKMV). Disordered regions lie at residues 98–163 (FTDQ…GSSR), 271–290 (SHSY…SSSA), 306–691 (QQQR…TRAR), and 749–826 (TRSR…QGQQ). The span at 143–163 (SSRNSYAGLDPSNQIGSGSSR) shows a compositional bias: polar residues. Positions 272–282 (HSYRKEHRPRG) are enriched in basic residues. The segment covering 372–390 (SLRSLSTRSSGSTESYCSG) has biased composition (low complexity). The span at 396 to 412 (NSTLSSYKSEQTSSTHI) shows a compositional bias: polar residues. Composition is skewed to basic and acidic residues over residues 416–457 (LSEH…DKTA), 507–521 (RPPE…EQGE), and 530–546 (KVCK…DVRP). The segment covering 556 to 571 (TSAHKPGRRRTGKKRA) has biased composition (basic residues). Composition is skewed to low complexity over residues 624 to 637 (SDSS…SCQS), 769 to 780 (AATGAAQASEEA), and 809 to 826 (TLLI…QGQQ). 13 consecutive transmembrane segments (helical) span residues 978-998 (FWIL…LLAL), 1009-1029 (ILAV…LIQG), 1034-1054 (IWVF…LKSV), 1068-1088 (IIAY…WLLD), 1118-1138 (LVIV…LPQV), 1162-1182 (LLAA…LYGL), 1195-1215 (HIPV…YHLS), 1268-1288 (LVVC…TVFT), 1296-1316 (YVLY…LPQV), 1406-1426 (SFSS…FFKF), 1434-1454 (TMLL…ELLY), 1458-1478 (FVYT…HAFA), and 1493-1513 (AVVS…AIFI). The disordered stretch occupies residues 2050-2120 (EDSDTGGGTS…VQSSLVRQSP (71 aa)). Composition is skewed to polar residues over residues 2060–2080 (CPAN…QGST) and 2094–2117 (PTTS…SLVR).

Belongs to the pecanex family. As to expression, specifically expressed in the germ line and not in the somatic cells of the testis, reaching its peak at the pachytene stage of the meiotic prophase. Detected in pachytene spermatocytes and round spermatids (at protein level).

It is found in the membrane. The polypeptide is Pecanex-like protein 1 (Rattus norvegicus (Rat)).